Reading from the N-terminus, the 562-residue chain is Phosphomethylpyrimidine synthase (562 aa).

Substrate contacts are provided by residues N179, M208, Y237, H273, 293–295, 334–337, and E373; these read SRG and DGLR. H377 is a Zn(2+) binding site. Y400 contributes to the substrate binding site. Residue H441 participates in Zn(2+) binding. [4Fe-4S] cluster-binding residues include C521, C524, and C529.

This sequence belongs to the ThiC family. Requires [4Fe-4S] cluster as cofactor.

It catalyses the reaction 5-amino-1-(5-phospho-beta-D-ribosyl)imidazole + S-adenosyl-L-methionine = 4-amino-2-methyl-5-(phosphooxymethyl)pyrimidine + CO + 5'-deoxyadenosine + formate + L-methionine + 3 H(+). It functions in the pathway cofactor biosynthesis; thiamine diphosphate biosynthesis. Catalyzes the synthesis of the hydroxymethylpyrimidine phosphate (HMP-P) moiety of thiamine from aminoimidazole ribotide (AIR) in a radical S-adenosyl-L-methionine (SAM)-dependent reaction. The sequence is that of Phosphomethylpyrimidine synthase from Geobacillus kaustophilus (strain HTA426).